Reading from the N-terminus, the 276-residue chain is MALKKVLTIAGSDTSAGAGMQADLKTFQELDVYGMVALTSIVTMDKETWSHDVTPIDMNVFEKQLETAISIGPDAIKTGMLGTQDIIKRAGDVFVESGADYFVVDPVMVCKGEDEVLNPGNTEAMIQYLLPKATVVTPNLFEAGQLSGLGKLTSIEDMKKAAQVIYDKGTPHVIIKGGKALDQDKSYDLYYDGQQFYQLTTDMFQQSYNHGAGCTFAAATTAYLANGKSPKEAIIAAKAFVASAIKNGWKMNDFVGPVDHGAYNRIEQINVEVTEV.

Asn-139 serves as a coordination point for ATP. Glu-142 serves as a coordination point for Mg(2+). Residues 176–180, Asp-188, Gly-213, and Lys-238 contribute to the ATP site; that span reads KGGKA.

This sequence belongs to the ThiD family.

The catalysed reaction is pyridoxal + ATP = pyridoxal 5'-phosphate + ADP + H(+). Its function is as follows. Phosphorylates B6 vitamers; functions in a salvage pathway. Uses pyridoxal, pyridoxine, and pyridoxamine as substrates. This is Putative pyridoxine kinase (pdxK) from Staphylococcus epidermidis (strain ATCC 12228 / FDA PCI 1200).